The following is a 305-amino-acid chain: MSSDLDRQIEQLKRCEIIKESEVRALCSKAREILLEEGNVQRVDSPVTICGDIHGQFYDLKELFKVGGDCPQTNYLFMGDFVDRGFYSVETFLLLLALKVRYPDRITLIRGNHESRQITQVYGFYEECVRKYGSVTVWKYCTEIFDYLSLSALVDGKIFCVHGGLSPSINTLDQIRAIDRKQEVPHEGPMCDLMWSDPEDIPGWNGSPRGAGFLFGEDVVQKFNHDNNLEFICRAHQLVMEGFKYMFNETLVTVWSAPNYCYRCGNVAAILQLDENLKKNFAIFEAAPQESRGAPAKKPAPEYFL.

Mn(2+)-binding residues include Asp52, His54, Asp80, and Asn112. His113 acts as the Proton donor in catalysis. Residues His162 and His236 each contribute to the Mn(2+) site.

Belongs to the PPP phosphatase family. PP-4 (PP-X) subfamily. Serine/threonine-protein phosphatase 4 (PP4) occurs in different assemblies of the catalytic and one or more regulatory subunits. Probably part of a PP4 complex containing ppp4c and ppp4r2. Interacts with smkA. Mn(2+) serves as cofactor.

The protein localises to the cytoplasm. The protein resides in the nucleus. It catalyses the reaction O-phospho-L-seryl-[protein] + H2O = L-seryl-[protein] + phosphate. The catalysed reaction is O-phospho-L-threonyl-[protein] + H2O = L-threonyl-[protein] + phosphate. Functionally, required for development, chemotaxis and the expression of numerous genes. In Dictyostelium discoideum (Social amoeba), this protein is Serine/threonine-protein phosphatase 4 catalytic subunit (ppp4c).